The chain runs to 224 residues: Peroxiredoxin-6 (224 aa).

Positions 5 to 169 (LLLGDEAPNF…ILRVVDSLQL (165 aa)) constitute a Thioredoxin domain. Residues 31-40 (DSWGILFSHP) are required and sufficient for targeting to lysosomes and lamellar bodies. Threonine 44 carries the post-translational modification Phosphothreonine. The Cysteine sulfenic acid (-SOH) intermediate; for peroxidase activity role is filled by cysteine 47. Residue lysine 63 is modified to N6-acetyllysine. Phosphotyrosine is present on tyrosine 89. At threonine 93 the chain carries Phosphothreonine. Catalysis depends on aspartate 140, which acts as the For phospholipase activity. Threonine 177 is subject to Phosphothreonine; by MAPK. An N6-acetyllysine; alternate modification is found at lysine 209. The residue at position 209 (lysine 209) is an N6-succinyllysine; alternate.

The protein belongs to the peroxiredoxin family. Prx6 subfamily. As to quaternary structure, homodimer. Interacts with GSTP1; mediates PRDX6 glutathionylation and regeneration. Interacts with APEX1. Interacts with STH. May interact with FAM168B. May interact with HTR2A. Irreversibly inactivated by overoxidation of Cys-47 to sulfinic acid (Cys-SO(2)H) and sulfonic acid (Cys-SO(3)H) forms upon oxidative stress. In terms of processing, phosphorylation at Thr-177 by MAP kinases increases the phospholipase activity of the enzyme. The phosphorylated form exhibits a greater lysophosphatidylcholine acyltransferase activity compared to the non-phosphorylated form. In terms of tissue distribution, highly expressed in heart, kidney and liver. Moderate expression in brain and stomach. Very low levels in intestine.

The protein resides in the cytoplasm. The protein localises to the lysosome. It carries out the reaction a hydroperoxide + 2 glutathione = an alcohol + glutathione disulfide + H2O. It catalyses the reaction a 1,2-diacyl-sn-glycero-3-phosphocholine + H2O = a 1-acyl-sn-glycero-3-phosphocholine + a fatty acid + H(+). The catalysed reaction is a 1-acyl-sn-glycero-3-phosphocholine + an acyl-CoA = a 1,2-diacyl-sn-glycero-3-phosphocholine + CoA. The enzyme catalyses 1-hexadecanoyl-sn-glycero-3-phosphocholine + hexadecanoyl-CoA = 1,2-dihexadecanoyl-sn-glycero-3-phosphocholine + CoA. It carries out the reaction 1,2-dihexadecanoyl-sn-glycero-3-phosphocholine + H2O = 1-hexadecanoyl-sn-glycero-3-phosphocholine + hexadecanoate + H(+). Its activity is regulated as follows. MJ33 or lithium;[(2R)-1-hexadecoxy-3-(2,2,2-trifluoroethoxy)propan-2-yl] methyl phosphate inhibits its phospholipase A2 activity. CI-976 or 2,2-Dimethyl-N-(2,4,6-trimethoxyphenyl)dodecanamide inhibits its lysophosphatidylcholine acyltransferase activity. In terms of biological role, thiol-specific peroxidase that catalyzes the reduction of hydrogen peroxide and organic hydroperoxides to water and alcohols, respectively. Can reduce H(2)O(2) and short chain organic, fatty acid, and phospholipid hydroperoxides. Has phospholipase activity. Can either reduce the oxidized sn-2 fatty acyl group of phospholipids (peroxidase activity) or hydrolyze the sn-2 ester bond of phospholipids (phospholipase activity). These activities are dependent on binding to phospholipids at acidic pH and to oxidized phospholipds at cytosolic pH. Plays a role in cell protection against oxidative stress by detoxifying peroxides and in phospholipid homeostasis. Exhibits acyl-CoA-dependent lysophospholipid acyltransferase which mediates the conversion of lysophosphatidylcholine (1-acyl-sn-glycero-3-phosphocholine or LPC) into phosphatidylcholine (1,2-diacyl-sn-glycero-3-phosphocholine or PC). Shows a clear preference for LPC as the lysophospholipid and for palmitoyl CoA as the fatty acyl substrate. The protein is Peroxiredoxin-6 (Prdx6) of Mus musculus (Mouse).